The chain runs to 156 residues: Transcription elongation factor GreA (156 aa).

It belongs to the GreA/GreB family.

Necessary for efficient RNA polymerase transcription elongation past template-encoded arresting sites. The arresting sites in DNA have the property of trapping a certain fraction of elongating RNA polymerases that pass through, resulting in locked ternary complexes. Cleavage of the nascent transcript by cleavage factors such as GreA or GreB allows the resumption of elongation from the new 3'terminus. GreA releases sequences of 2 to 3 nucleotides. The sequence is that of Transcription elongation factor GreA from Thermomicrobium roseum (strain ATCC 27502 / DSM 5159 / P-2).